We begin with the raw amino-acid sequence, 67 residues long: UPF0434 protein Tcr_0959 (67 aa).

It belongs to the UPF0434 family.

The polypeptide is UPF0434 protein Tcr_0959 (Hydrogenovibrio crunogenus (strain DSM 25203 / XCL-2) (Thiomicrospira crunogena)).